The chain runs to 96 residues: Small ribosomal subunit protein bS18 (96 aa).

It belongs to the bacterial ribosomal protein bS18 family. In terms of assembly, part of the 30S ribosomal subunit. Forms a tight heterodimer with protein bS6.

Binds as a heterodimer with protein bS6 to the central domain of the 16S rRNA, where it helps stabilize the platform of the 30S subunit. This is Small ribosomal subunit protein bS18 from Borrelia garinii subsp. bavariensis (strain ATCC BAA-2496 / DSM 23469 / PBi) (Borreliella bavariensis).